Here is a 79-residue protein sequence, read N- to C-terminus: Putative defensin-like protein 29 (79 aa).

The first 26 residues, Met-1 to Ala-26, serve as a signal peptide directing secretion. Intrachain disulfides connect Cys-45–Cys-65, Cys-51–Cys-74, and Cys-55–Cys-76.

This sequence belongs to the DEFL family.

The protein resides in the secreted. The protein is Putative defensin-like protein 29 of Arabidopsis thaliana (Mouse-ear cress).